The following is a 147-amino-acid chain: Prefoldin subunit alpha 2 (147 aa).

It belongs to the prefoldin subunit alpha family. As to quaternary structure, heterohexamer of two alpha and four beta subunits.

Its subcellular location is the cytoplasm. Functionally, molecular chaperone capable of stabilizing a range of proteins. Seems to fulfill an ATP-independent, HSP70-like function in archaeal de novo protein folding. This chain is Prefoldin subunit alpha 2 (pfdA2), found in Methanocaldococcus jannaschii (strain ATCC 43067 / DSM 2661 / JAL-1 / JCM 10045 / NBRC 100440) (Methanococcus jannaschii).